The sequence spans 156 residues: ATP synthase subunit b (156 aa).

A helical transmembrane segment spans residues 7 to 29; the sequence is LFAQMVVFLVLAWFTMKFVWPPL.

This sequence belongs to the ATPase B chain family. As to quaternary structure, F-type ATPases have 2 components, F(1) - the catalytic core - and F(0) - the membrane proton channel. F(1) has five subunits: alpha(3), beta(3), gamma(1), delta(1), epsilon(1). F(0) has three main subunits: a(1), b(2) and c(10-14). The alpha and beta chains form an alternating ring which encloses part of the gamma chain. F(1) is attached to F(0) by a central stalk formed by the gamma and epsilon chains, while a peripheral stalk is formed by the delta and b chains.

It is found in the cell inner membrane. Functionally, f(1)F(0) ATP synthase produces ATP from ADP in the presence of a proton or sodium gradient. F-type ATPases consist of two structural domains, F(1) containing the extramembraneous catalytic core and F(0) containing the membrane proton channel, linked together by a central stalk and a peripheral stalk. During catalysis, ATP synthesis in the catalytic domain of F(1) is coupled via a rotary mechanism of the central stalk subunits to proton translocation. Component of the F(0) channel, it forms part of the peripheral stalk, linking F(1) to F(0). In Burkholderia ambifaria (strain MC40-6), this protein is ATP synthase subunit b.